The following is a 479-amino-acid chain: Signal recognition particle subunit SRP54 1 (479 aa).

The segment at 1–295 (MVLAELGGRI…DVKPFVSRLL (295 aa)) is G-domain. GTP is bound by residues 108-115 (GLQGAGKT), 190-194 (DTSGR), and 248-251 (TKMD). Residues 296–479 (GKGDWSGLVD…MMGMFGGGGK (184 aa)) form an M-domain region.

The protein belongs to the GTP-binding SRP family. SRP54 subfamily. Component of a signal recognition particle (SRP) complex that consists of a 7SL RNA molecule of 300 nucleotides and six protein subunits: SRP72, SRP68, SRP54, SRP19, SRP14 and SRP9.

It is found in the cytoplasm. Its subcellular location is the endoplasmic reticulum. It carries out the reaction GTP + H2O = GDP + phosphate + H(+). In terms of biological role, component of the signal recognition particle (SRP) complex, a ribonucleoprotein complex that mediates the cotranslational targeting of secretory and membrane proteins to the endoplasmic reticulum (ER). As part of the SRP complex, associates with the SRP receptor (SR) component SRPRA to target secretory proteins to the endoplasmic reticulum membrane. Binds to the signal sequence of presecretory proteins when they emerge from the ribosomes. Displays basal GTPase activity, and stimulates reciprocal GTPase activation of the SR subunit SRPRA. Forms a guanosine 5'-triphosphate (GTP)-dependent complex with the SR subunit SRPRA. SR compaction and GTPase mediated rearrangement of SR drive SRP-mediated cotranslational protein translocation into the ER. Requires the presence of SRP9/SRP14 and/or SRP19 to stably interact with RNA. In Arabidopsis thaliana (Mouse-ear cress), this protein is Signal recognition particle subunit SRP54 1 (SRP-54A).